Consider the following 466-residue polypeptide: Asparagine--tRNA ligase (466 aa).

It belongs to the class-II aminoacyl-tRNA synthetase family. In terms of assembly, homodimer.

It is found in the cytoplasm. The enzyme catalyses tRNA(Asn) + L-asparagine + ATP = L-asparaginyl-tRNA(Asn) + AMP + diphosphate + H(+). This is Asparagine--tRNA ligase from Buchnera aphidicola subsp. Baizongia pistaciae (strain Bp).